Consider the following 122-residue polypeptide: Large ribosomal subunit protein uL14 (122 aa).

This sequence belongs to the universal ribosomal protein uL14 family. As to quaternary structure, part of the 50S ribosomal subunit. Forms a cluster with proteins L3 and L19. In the 70S ribosome, L14 and L19 interact and together make contacts with the 16S rRNA in bridges B5 and B8.

Functionally, binds to 23S rRNA. Forms part of two intersubunit bridges in the 70S ribosome. The sequence is that of Large ribosomal subunit protein uL14 from Desulfotalea psychrophila (strain LSv54 / DSM 12343).